Reading from the N-terminus, the 670-residue chain is Segment polarity protein dishevelled homolog DVL-1 (670 aa).

A DIX domain is found at 1-85 (MAETKIIYHM…RVVSWLVLAE (85 aa)). Residues 89-237 (SDAGSQGTDS…LRQADRASSF (149 aa)) are disordered. The span at 142–151 (SHRRERARRR) shows a compositional bias: basic residues. Residues 152–171 (NREEAARTNGHPRGDRRRDV) are compositionally biased toward basic and acidic residues. A compositionally biased stretch (low complexity) spans 176-192 (DSASTALSSELESSSFV). Position 194 is a phosphoserine (serine 194). The segment covering 200-214 (TSRLSSSTEQSTSSR) has biased composition (low complexity). A compositionally biased stretch (basic residues) spans 215 to 228 (LIRKHKRRRRKQRL). Residues 251-323 (TVTLNMERHH…NDDAVRVLRE (73 aa)) enclose the PDZ domain. In terms of domain architecture, DEP spans 400–474 (PDSGLEIRDR…SEQCYYVFGD (75 aa)). Residues 518 to 642 (PGPPPCFPPA…PGGPPVRELA (125 aa)) are disordered. Residues 526–555 (PAYQDPGFSYGSGSTGSQQSEGSKSSGSTR) are compositionally biased toward low complexity. Residues 600–611 (SRGSSPRSQASA) show a composition bias toward polar residues.

This sequence belongs to the DSH family. In terms of assembly, interacts with CXXC4. Interacts (via PDZ domain) with NXN. Interacts with BRD7 and INVS. Interacts (via PDZ domain) with VANGL1 and VANGL2 (via C-terminus). Interacts with ARRB1; the interaction is enhanced by phosphorylation of DVL1. Interacts with CYLD. Interacts (via PDZ domain) with RYK. Self-associates (via DIX domain) and forms higher homooligomers. Interacts (via PDZ domain) with DACT1 and FZD7, where DACT1 and FZD7 compete for the same binding site. Interacts (via DEP domain) with MUSK; the interaction is direct and mediates the formation a DVL1, MUSK and PAK1 ternary complex involved in AChR clustering. Interacts (via PDZ domain) with TMEM88. Interacts with DCDC2. Interacts with FOXK2. Interacts with PKD1 (via extracellular domain). Interacts (via PDZ domain) with CCDC88C/DAPLE; competes with CCDC88C for binding to frizzled receptor FZD7 and dissociates from CCDC88C following initiation of non-canonical Wnt signaling when CCDC88C displaces DVL1 from ligand-activated FZD7. Ubiquitinated; undergoes both 'Lys-48'-linked ubiquitination, leading to its subsequent degradation by the ubiquitin-proteasome pathway, and 'Lys-63'-linked ubiquitination. The interaction with INVS is required for ubiquitination. Deubiquitinated by CYLD, which acts on 'Lys-63'-linked ubiquitin chains.

It is found in the cell membrane. Its subcellular location is the cytoplasm. The protein resides in the cytosol. It localises to the cytoplasmic vesicle. Its function is as follows. Participates in Wnt signaling by binding to the cytoplasmic C-terminus of frizzled family members and transducing the Wnt signal to down-stream effectors. Plays a role both in canonical and non-canonical Wnt signaling. Plays a role in the signal transduction pathways mediated by multiple Wnt genes. Required for LEF1 activation upon WNT1 and WNT3A signaling. DVL1 and PAK1 form a ternary complex with MUSK which is important for MUSK-dependent regulation of AChR clustering during the formation of the neuromuscular junction (NMJ). The chain is Segment polarity protein dishevelled homolog DVL-1 (DVL1) from Pan troglodytes (Chimpanzee).